The chain runs to 88 residues: U2-ctenitoxin-Pn1a (88 aa).

The first 17 residues, 1 to 17 (MKVAILILSILVLAVAS), serve as a signal peptide directing secretion. Residues 18 to 34 (ETIEEYRDDFAVEELER) constitute a propeptide that is removed on maturation. 5 disulfides stabilise this stretch: Cys-37/Cys-51, Cys-44/Cys-57, Cys-48/Cys-86, Cys-50/Cys-71, and Cys-59/Cys-69. A propeptide is located at residue Lys-88.

In terms of tissue distribution, expressed by the venom gland.

It is found in the secreted. Functionally, inhibits voltage-gated sodium channels (Nav). Causes scratching, lacrimation, hypersalivation, sweating and agitation followed by spastic paralysis of the anterior and posterior extremities and death at dose levels of 1.62 mg/mouse. Insecticidal to the larval and adult forms of the house fly. This Phoneutria nigriventer (Brazilian armed spider) protein is U2-ctenitoxin-Pn1a.